The following is a 72-amino-acid chain: Large ribosomal subunit protein bL31 (72 aa).

4 residues coordinate Zn(2+): Cys16, Cys18, Cys38, and Cys41.

It belongs to the bacterial ribosomal protein bL31 family. Type A subfamily. As to quaternary structure, part of the 50S ribosomal subunit. Zn(2+) is required as a cofactor.

Binds the 23S rRNA. In Aliivibrio fischeri (strain ATCC 700601 / ES114) (Vibrio fischeri), this protein is Large ribosomal subunit protein bL31.